A 248-amino-acid chain; its full sequence is MSSAIYPSLKGKRVVITGGGSGIGAGLTAGFARQGAEVIFLDIADEDSRALEAELAGSPIPPVYKRCDLMNLEAIKAVFAEIGDVDVLVNNAGNDDRHKLADVTGAYWDERINVNLRHMLFCTQAVAPGMKKRGGGAVINFGSISWHLGLEDLVLYETAKAGIEGMTRALARELGPDDIRVTCVVPGNVKTKRQEKWYTPEGEAQIVAAQCLKGRIVPENVAALVLFLASDDASLCTGHEYWIDAGWR.

Residues aspartate 42, aspartate 68, asparagine 91, tyrosine 156, lysine 160, valine 189, and threonine 191 each contribute to the NAD(+) site. Tyrosine 156 functions as the Proton acceptor in the catalytic mechanism.

It belongs to the short-chain dehydrogenases/reductases (SDR) family.

The enzyme catalyses D-xylose + NAD(+) = D-xylono-1,5-lactone + NADH + H(+). Involved in the degradation of D-xylose. Catalyzes the initial reaction in the xylose utilization pathway by oxydizing D-xylose into D-xylonolactone. Shows some activity with L-arabinose and D-lyxose, but D-xylose is clearly the best substrate. Has no activity with D-ribose, D-glucose, D-galactose or D-mannose. The protein is D-xylose 1-dehydrogenase of Caulobacter vibrioides (strain ATCC 19089 / CIP 103742 / CB 15) (Caulobacter crescentus).